The primary structure comprises 306 residues: Low-density lipoprotein receptor class A domain-containing protein 4 (306 aa).

The Lumenal portion of the chain corresponds to 1 to 64 (MPEAGFQATN…PPGIFNSELE (64 aa)). Positions 16 to 48 (KFTCTSGKCLYLGSLVCNQQNDCGDNSDEENCL) constitute an LDL-receptor class A domain. Intrachain disulfides connect C19–C38 and C32–C47. Residues 65–85 (FAQIIIIVVVVTVMVVVIVCL) traverse the membrane as a helical segment. Residues 86-306 (LNHYKVSTRS…GKDRKPGNLV (221 aa)) are Cytoplasmic-facing. The PPxY motif 1 signature appears at 180–183 (PPPY). The SMAD interaction motif (SIM) signature appears at 208–211 (PPNR). Positions 252–255 (PPTY) match the PPxY motif 2 motif. Positions 286 to 306 (NNAESTIVPIKGKDRKPGNLV) are disordered. Basic and acidic residues predominate over residues 296–306 (KGKDRKPGNLV).

It belongs to the PMEPA1 family. Interacts with PMEPA1. Interacts (via the SMAD interaction motif) with SMAD2 and SMAD3. In terms of tissue distribution, expressed in lymphocytes.

Its subcellular location is the early endosome membrane. Functionally, functions as a negative regulator of TGF-beta signaling and thereby probably plays a role in cell proliferation, differentiation, apoptosis, motility, extracellular matrix production and immunosuppression. In the canonical TGF-beta pathway, ZFYVE9/SARA recruits the intracellular signal transducer and transcriptional modulators SMAD2 and SMAD3 to the TGF-beta receptor. Phosphorylated by the receptor, SMAD2 and SMAD3 then form a heteromeric complex with SMAD4 that translocates to the nucleus to regulate transcription. Through interaction with SMAD2 and SMAD3, LDLRAD4 may compete with ZFYVE9 and SMAD4 and prevent propagation of the intracellular signal. The protein is Low-density lipoprotein receptor class A domain-containing protein 4 (LDLRAD4) of Homo sapiens (Human).